Here is a 741-residue protein sequence, read N- to C-terminus: Subtilisin-like protease SBT4.4 (741 aa).

An N-terminal signal peptide occupies residues 1–24; it reads MAKGTTFIFLFSSLLVLSLSSVSA. Positions 25-112 are cleaved as a propeptide — activation peptide; sequence DKDDHGDQQV…VFPSRKLKLQ (88 aa). The Inhibitor I9 domain maps to 34 to 111; it reads VYIVYLGSLP…SVFPSRKLKL (78 aa). Positions 116-589 constitute a Peptidase S8 domain; the sequence is SWNFMGLKEG…SGHVDPIDAI (474 aa). Asp-144 serves as the catalytic Charge relay system. 2 N-linked (GlcNAc...) asparagine glycosylation sites follow: Asn-175 and Asn-195. His-204 acts as the Charge relay system in catalysis. Asn-227 and Asn-357 each carry an N-linked (GlcNAc...) asparagine glycan. The region spanning 359-445 is the PA domain; it reads TNYPLVYGKS…LSNDDYKSLV (87 aa). The N-linked (GlcNAc...) asparagine glycan is linked to Asn-449. The Charge relay system role is filled by Ser-528. N-linked (GlcNAc...) asparagine glycosylation is found at Asn-565, Asn-610, Asn-623, and Asn-654.

It belongs to the peptidase S8 family. In terms of processing, the C-terminal propeptide is autocleaved.

It localises to the secreted. The protein is Subtilisin-like protease SBT4.4 of Arabidopsis thaliana (Mouse-ear cress).